Consider the following 80-residue polypeptide: uncharacterized protein (80 aa).

The next 3 helical transmembrane spans lie at 2–22 (INLW…IGQV), 32–52 (FFGM…LTGG), and 55–75 (LVTG…RFMV).

It is found in the cell membrane. This is an uncharacterized protein from Escherichia coli (strain K12).